Consider the following 134-residue polypeptide: Small ribosomal subunit protein uS8 (134 aa).

Belongs to the universal ribosomal protein uS8 family. In terms of assembly, part of the 30S ribosomal subunit. Contacts proteins S5 and S12.

In terms of biological role, one of the primary rRNA binding proteins, it binds directly to 16S rRNA central domain where it helps coordinate assembly of the platform of the 30S subunit. This is Small ribosomal subunit protein uS8 from Sphingopyxis alaskensis (strain DSM 13593 / LMG 18877 / RB2256) (Sphingomonas alaskensis).